The chain runs to 308 residues: ATP synthase gamma chain (308 aa).

Belongs to the ATPase gamma chain family. F-type ATPases have 2 components, CF(1) - the catalytic core - and CF(0) - the membrane proton channel. CF(1) has five subunits: alpha(3), beta(3), gamma(1), delta(1), epsilon(1). CF(0) has three main subunits: a, b and c.

It localises to the cell membrane. Its function is as follows. Produces ATP from ADP in the presence of a proton gradient across the membrane. The gamma chain is believed to be important in regulating ATPase activity and the flow of protons through the CF(0) complex. In Saccharopolyspora erythraea (strain ATCC 11635 / DSM 40517 / JCM 4748 / NBRC 13426 / NCIMB 8594 / NRRL 2338), this protein is ATP synthase gamma chain.